A 548-amino-acid chain; its full sequence is Chaperonin GroEL (548 aa).

ATP is bound by residues 30–33 (TLGP), Lys51, 87–91 (DGTTT), Gly415, and Asp495.

This sequence belongs to the chaperonin (HSP60) family. Forms a cylinder of 14 subunits composed of two heptameric rings stacked back-to-back. Interacts with the co-chaperonin GroES.

It is found in the cytoplasm. The enzyme catalyses ATP + H2O + a folded polypeptide = ADP + phosphate + an unfolded polypeptide.. Functionally, together with its co-chaperonin GroES, plays an essential role in assisting protein folding. The GroEL-GroES system forms a nano-cage that allows encapsulation of the non-native substrate proteins and provides a physical environment optimized to promote and accelerate protein folding. The protein is Chaperonin GroEL of Yersinia pseudotuberculosis serotype O:1b (strain IP 31758).